The sequence spans 788 residues: MQRYNSTYVVKRDGRKEDVHFDKITSRIQKLSYGLNMDFVDPVAVAIKVISGLYKGVTTVELDNLAAETAASMTTQHPEYALLAARIAVSNLHKKTNKVFSEVMKTLHEFHHPHTGKHAPMISDETWAIIEKNADKLNSAIVYDRDYSYTYFGFKTLERSYLLKINKEIVERPQQMLMRVSIGIHGDDITSAIETYNLMSERYMTHASPTLFNSGTCRPQMSSCFLLTMSEDSILGIYDTLKQCALISKSAGGIGLNVHKIRATGSVIAGTNGTSNGLIPMLRVYNNTARYVDQGGNKRPGAFAIYLEPWHADIFEFVSLRKNTGPEEERARDLFLALWIPDLFMKRVEKDQEWSLMCPCECPGLDDCWGEEFEALYAKYEAEGRVRKTVKARKLWEHIVSNQIETGLPYITYKDAANRKSNQQNLGTIKCSNLCTEIIEYSAPDEIAVCNLASIALNRYVTPEKKFDFVKLAEVTKVITRNLNKIIDVNYYPVEEARNSNMRHRPIGLGVQGLADCFMLMRYPFTSAEARDLNKRIFETIYYAALEASCELAELNGPYSTYEGSPVSKGQLQFDMWGVTPTDQCDWATLRKKIAKHGIRNSLLMAPMPTASTAQILGNNESIEPYTSNIYSRRVLSGDFQIVNPHMLKDLVERGLWTDEMKNRLIANNGSIQNIDGIPSDIKELYRTVWEISQKDIIEMAADRGAYIDQSQSLNIHMAKPSYAGITSMHFYGWKKGLKTGMYYLRTKPAVNAVQFTVDKNALKTNQQAETPATVAESQDEGCLMCSG.

In terms of domain architecture, ATP-cone spans 7 to 98; the sequence is TYVVKRDGRK…VSNLHKKTNK (92 aa). ATP contacts are provided by residues 11–12, 17–23, threonine 59, and aspartate 63; these read KR and EDVHFDK. The GDP site is built by serine 208 and serine 223. Cysteines 224 and 450 form a disulfide. DTTP is bound by residues 232–234, lysine 249, arginine 262, and 269–270; these read DSI and AG. Asparagine 433 contacts GDP. The active-site Proton acceptor is asparagine 433. Cysteine 435 serves as the catalytic Cysteine radical intermediate. GDP is bound by residues glutamate 437 and 610 to 613; that span reads TAST. The Proton acceptor role is filled by glutamate 437.

The protein belongs to the ribonucleoside diphosphate reductase large chain family. In terms of assembly, heterodimer of a large and a small subunit.

The catalysed reaction is a 2'-deoxyribonucleoside 5'-diphosphate + [thioredoxin]-disulfide + H2O = a ribonucleoside 5'-diphosphate + [thioredoxin]-dithiol. Its activity is regulated as follows. Under complex allosteric control mediated by deoxynucleoside triphosphates and ATP binding to separate specificity and activation sites on the large subunit. The type of nucleotide bound at the specificity site determines substrate preference. It seems probable that ATP makes the enzyme reduce CDP and UDP, dGTP favors ADP reduction and dTTP favors GDP reduction. Stimulated by ATP and inhibited by dATP binding to the activity site. Provides the precursors necessary for DNA synthesis. Catalyzes the biosynthesis of deoxyribonucleotides from the corresponding ribonucleotides. The polypeptide is Ribonucleoside-diphosphate reductase large subunit (rnr-1) (Caenorhabditis elegans).